The primary structure comprises 89 residues: Small ribosomal subunit protein uS15 (89 aa).

Residues 1 to 11 show a composition bias toward basic and acidic residues; it reads MSIAAERKAEV. Residues 1–25 form a disordered region; sequence MSIAAERKAEVIKTSANKPGDTGSP.

Belongs to the universal ribosomal protein uS15 family. Part of the 30S ribosomal subunit. Forms a bridge to the 50S subunit in the 70S ribosome, contacting the 23S rRNA.

One of the primary rRNA binding proteins, it binds directly to 16S rRNA where it helps nucleate assembly of the platform of the 30S subunit by binding and bridging several RNA helices of the 16S rRNA. In terms of biological role, forms an intersubunit bridge (bridge B4) with the 23S rRNA of the 50S subunit in the ribosome. In Nitrobacter winogradskyi (strain ATCC 25391 / DSM 10237 / CIP 104748 / NCIMB 11846 / Nb-255), this protein is Small ribosomal subunit protein uS15.